The following is a 1247-amino-acid chain: uncharacterized protein (1247 aa).

Disordered stretches follow at residues 25–141 (KYNN…HSPP), 169–431 (AANN…QQPQ), 472–667 (QQQP…PSSS), 738–770 (NSNS…SEPI), 807–857 (YSNR…QNIE), 869–1087 (GKNF…NNNN), 1099–1122 (STLN…ESQQ), and 1139–1162 (QQQQ…KGDG). Residues 26–125 (YNNSNNYNNN…SNNSINSNSY (100 aa)) show a composition bias toward low complexity. Positions 126–139 (KVNTPTQNGKSSHS) are enriched in polar residues. 3 stretches are compositionally biased toward low complexity: residues 169-178 (AANNGSSNSS), 185-223 (SNSN…NYNS), and 230-341 (NNNN…YSNS). Polar residues predominate over residues 342 to 356 (KYNQQKSYNNAPHQL). 4 stretches are compositionally biased toward low complexity: residues 363 to 375 (NSYY…NNGN), 385 to 394 (GSGNSSNSNG), 409 to 431 (QSQS…QQPQ), and 472 to 484 (QQQP…QQQQ). Over residues 511-522 (GLNNSLNGQTDL) the composition is skewed to polar residues. Composition is skewed to low complexity over residues 523–544 (NNSN…TNNN), 553–628 (YNYN…VGSN), 655–667 (TPSS…PSSS), 738–759 (NSNS…NNNH), 807–855 (YSNR…DSQN), and 871–928 (NFNN…ENNN). Over residues 929 to 942 (GDVFSNGFSTWTPK) the composition is skewed to polar residues. The span at 943–983 (SGSNSLNNSQNNLSNGQNSSNNSQNNLNNSQNSLNSSGNHH) shows a compositional bias: low complexity. The span at 984–995 (SNYHGHNNHHHY) shows a compositional bias: basic residues. Positions 996–1021 (NNNNNNNNNNNNNNNNNNNNNNNGNG) are enriched in low complexity. The segment covering 1026–1044 (YYNNKYQQKSPQHQSSNSV) has biased composition (polar residues). Residues 1047-1060 (IPPPGFSTIAPPPG) show a composition bias toward pro residues. The span at 1064–1087 (NNNNNNNNNNNNNNNKNNNSNNNN) shows a compositional bias: low complexity. Residues 1099 to 1108 (STLNNSQDDS) show a composition bias toward polar residues. Positions 1110 to 1122 (QQEQEQQEQESQQ) are enriched in low complexity.

This is an uncharacterized protein from Dictyostelium discoideum (Social amoeba).